The primary structure comprises 277 residues: Eukaryotic translation initiation factor 3 subunit J (277 aa).

The segment at 1–80 (MSWDDEDFAV…PAATKNTMLD (80 aa)) is disordered. Residues 23–43 (WDDEFAENDDEPVLESWEDEE) show a composition bias toward acidic residues. The span at 50–75 (KAAAAAAAKAPKKASPSPAATPAATK) shows a compositional bias: low complexity. A coiled-coil region spans residues 199 to 230 (TVENIRQTIATLNVLMKDKEREERQARLAKVK). The tract at residues 257-277 (DNDFDLGGNDNFDDFGEDDFM) is disordered. Acidic residues predominate over residues 267–277 (NFDDFGEDDFM).

This sequence belongs to the eIF-3 subunit J family. In terms of assembly, component of the eukaryotic translation initiation factor 3 (eIF-3) complex.

Its subcellular location is the cytoplasm. In terms of biological role, component of the eukaryotic translation initiation factor 3 (eIF-3) complex, which is involved in protein synthesis of a specialized repertoire of mRNAs and, together with other initiation factors, stimulates binding of mRNA and methionyl-tRNAi to the 40S ribosome. The eIF-3 complex specifically targets and initiates translation of a subset of mRNAs involved in cell proliferation. This is Eukaryotic translation initiation factor 3 subunit J from Kluyveromyces lactis (strain ATCC 8585 / CBS 2359 / DSM 70799 / NBRC 1267 / NRRL Y-1140 / WM37) (Yeast).